A 639-amino-acid chain; its full sequence is Chaperone protein DnaK (639 aa).

Position 198 is a phosphothreonine; by autocatalysis (Thr-198). Positions 601–639 are disordered; the sequence is AQQAPGADSCGGDCGQQQEAGAKPKDEKVVDADFEEVKK. Residues 622–639 show a composition bias toward basic and acidic residues; it reads AKPKDEKVVDADFEEVKK.

The protein belongs to the heat shock protein 70 family.

Its function is as follows. Acts as a chaperone. This is Chaperone protein DnaK from Trichlorobacter lovleyi (strain ATCC BAA-1151 / DSM 17278 / SZ) (Geobacter lovleyi).